The chain runs to 183 residues: Small ribosomal subunit protein uS4c (183 aa).

In terms of domain architecture, S4 RNA-binding spans 82–143 (MRLDNILFRL…KQRSKALIQN (62 aa)).

Belongs to the universal ribosomal protein uS4 family. Part of the 30S ribosomal subunit. Contacts protein S5. The interaction surface between S4 and S5 is involved in control of translational fidelity.

The protein localises to the plastid. It is found in the chloroplast. In terms of biological role, one of the primary rRNA binding proteins, it binds directly to 16S rRNA where it nucleates assembly of the body of the 30S subunit. Its function is as follows. With S5 and S12 plays an important role in translational accuracy. This chain is Small ribosomal subunit protein uS4c (rps4), found in Aristea capitata.